The following is a 56-amino-acid chain: Large ribosomal subunit protein bL32 (56 aa).

The span at 1–20 shows a compositional bias: basic residues; sequence MAVPKKKKSKSKRNHRHAVW. The interval 1-21 is disordered; it reads MAVPKKKKSKSKRNHRHAVWK.

The protein belongs to the bacterial ribosomal protein bL32 family.

The chain is Large ribosomal subunit protein bL32 from Prochlorococcus marinus (strain MIT 9312).